The sequence spans 916 residues: Protein translocase subunit SecA (916 aa).

ATP contacts are provided by residues Q87, 105–109 (GEGKT), and D507. C900, C902, C911, and H912 together coordinate Zn(2+).

This sequence belongs to the SecA family. In terms of assembly, monomer and homodimer. Part of the essential Sec protein translocation apparatus which comprises SecA, SecYEG and auxiliary proteins SecDF-YajC and YidC. Zn(2+) is required as a cofactor.

The protein localises to the cell inner membrane. It is found in the cytoplasm. It catalyses the reaction ATP + H2O + cellular proteinSide 1 = ADP + phosphate + cellular proteinSide 2.. In terms of biological role, part of the Sec protein translocase complex. Interacts with the SecYEG preprotein conducting channel. Has a central role in coupling the hydrolysis of ATP to the transfer of proteins into and across the cell membrane, serving both as a receptor for the preprotein-SecB complex and as an ATP-driven molecular motor driving the stepwise translocation of polypeptide chains across the membrane. The polypeptide is Protein translocase subunit SecA (Neisseria gonorrhoeae (strain NCCP11945)).